The primary structure comprises 278 residues: Undecaprenyl-diphosphatase (278 aa).

Transmembrane regions (helical) follow at residues Ala-2 to Leu-22, Ala-44 to Leu-64, Ile-85 to Trp-105, Phe-113 to Ile-133, Ile-150 to Gly-170, Thr-189 to Leu-209, Leu-223 to Phe-243, and Phe-253 to Ala-273.

This sequence belongs to the UppP family.

Its subcellular location is the cell membrane. The catalysed reaction is di-trans,octa-cis-undecaprenyl diphosphate + H2O = di-trans,octa-cis-undecaprenyl phosphate + phosphate + H(+). Its function is as follows. Catalyzes the dephosphorylation of undecaprenyl diphosphate (UPP). Confers resistance to bacitracin. The protein is Undecaprenyl-diphosphatase of Desulfitobacterium hafniense (strain DSM 10664 / DCB-2).